The following is a 132-amino-acid chain: Small ribosomal subunit protein uS8 (132 aa).

This sequence belongs to the universal ribosomal protein uS8 family. In terms of assembly, part of the 30S ribosomal subunit. Contacts proteins S5 and S12.

One of the primary rRNA binding proteins, it binds directly to 16S rRNA central domain where it helps coordinate assembly of the platform of the 30S subunit. This chain is Small ribosomal subunit protein uS8, found in Mesorhizobium japonicum (strain LMG 29417 / CECT 9101 / MAFF 303099) (Mesorhizobium loti (strain MAFF 303099)).